We begin with the raw amino-acid sequence, 121 residues long: Nitrogenase-stabilizing/protective protein NifW (121 aa).

Belongs to the NifW family. In terms of assembly, homotrimer; associates with NifD.

Functionally, may protect the nitrogenase Fe-Mo protein from oxidative damage. This chain is Nitrogenase-stabilizing/protective protein NifW, found in Leptothrix cholodnii (strain ATCC 51168 / LMG 8142 / SP-6) (Leptothrix discophora (strain SP-6)).